The primary structure comprises 480 residues: 3,6-anhydro-alpha-L-galactose dehydrogenase (480 aa).

Residues 149 to 150 (WN), 173 to 176 (KPTS), and 226 to 227 (GS) contribute to the NADP(+) site. The active-site Proton acceptor is the E248. L249 lines the NADP(+) pocket. C282 serves as the catalytic Nucleophile. Residue E383 coordinates NADP(+).

This sequence belongs to the aldehyde dehydrogenase family.

The catalysed reaction is 3,6-anhydro-alpha-L-galactopyranose + NADP(+) + H2O = 3,6-anhydro-L-galactonate + NADPH + 2 H(+). It carries out the reaction 3,6-anhydro-alpha-L-galactopyranose + NAD(+) + H2O = 3,6-anhydro-L-galactonate + NADH + 2 H(+). In terms of biological role, involved in the degradation of 3,6-anhydro-L-galactose, which is the major monomeric sugar of red macroalgae. Catalyzes the oxidation of 3,6-anhydro-L-galactose (AHG) to form 3,6-anhydrogalactonate (AHGA). This is 3,6-anhydro-alpha-L-galactose dehydrogenase from Vibrio sp. (strain EJY3).